A 266-amino-acid chain; its full sequence is Tryptophan synthase alpha chain (266 aa).

Catalysis depends on proton acceptor residues Glu49 and Asp60.

This sequence belongs to the TrpA family. In terms of assembly, tetramer of two alpha and two beta chains.

The catalysed reaction is (1S,2R)-1-C-(indol-3-yl)glycerol 3-phosphate + L-serine = D-glyceraldehyde 3-phosphate + L-tryptophan + H2O. Its pathway is amino-acid biosynthesis; L-tryptophan biosynthesis; L-tryptophan from chorismate: step 5/5. The alpha subunit is responsible for the aldol cleavage of indoleglycerol phosphate to indole and glyceraldehyde 3-phosphate. The polypeptide is Tryptophan synthase alpha chain (Opitutus terrae (strain DSM 11246 / JCM 15787 / PB90-1)).